The primary structure comprises 141 residues: Lutropin subunit beta (141 aa).

A signal peptide spans 1-20 (MEMLQGLLLWLLLSVGGVWA). 6 cysteine pairs are disulfide-bonded: cysteine 29–cysteine 77, cysteine 43–cysteine 92, cysteine 46–cysteine 130, cysteine 54–cysteine 108, cysteine 58–cysteine 110, and cysteine 113–cysteine 120. Asparagine 33 is a glycosylation site (N-linked (GlcNAc...) asparagine).

The protein belongs to the glycoprotein hormones subunit beta family. Heterodimer of a common alpha chain and a unique beta chain which confers biological specificity to thyrotropin, lutropin, follitropin and gonadotropin.

The protein resides in the secreted. Its function is as follows. Promotes spermatogenesis and ovulation by stimulating the testes and ovaries to synthesize steroids. The chain is Lutropin subunit beta (LHB1) from Ceratotherium simum (White rhinoceros).